Here is a 220-residue protein sequence, read N- to C-terminus: MKFEKYIDHTLLKPESTRTQIDQIIDEAKAYNFKSVCVNPTHVKYAAERLADSEVLVCTVIGFPLGASTTATKAFETEDAIQNGADEIDMVINIGALKDGRFDDVQQDIEAVVKAAKGHTVKVIIETVLLDHDEIVKASELTKAAGADFVKTSTGFAGGGATAEDVKLMKDTVGADVEVKASGGVRNLEDFNKMVEAGATRIGASAGVQIMQGLEADSDY.

The active-site Proton donor/acceptor is Asp89. Lys151 functions as the Schiff-base intermediate with acetaldehyde in the catalytic mechanism. Catalysis depends on Lys180, which acts as the Proton donor/acceptor.

This sequence belongs to the DeoC/FbaB aldolase family. DeoC type 1 subfamily.

Its subcellular location is the cytoplasm. It carries out the reaction 2-deoxy-D-ribose 5-phosphate = D-glyceraldehyde 3-phosphate + acetaldehyde. It participates in carbohydrate degradation; 2-deoxy-D-ribose 1-phosphate degradation; D-glyceraldehyde 3-phosphate and acetaldehyde from 2-deoxy-alpha-D-ribose 1-phosphate: step 2/2. Its function is as follows. Catalyzes a reversible aldol reaction between acetaldehyde and D-glyceraldehyde 3-phosphate to generate 2-deoxy-D-ribose 5-phosphate. The polypeptide is Deoxyribose-phosphate aldolase 1 (Staphylococcus aureus (strain COL)).